Here is an 86-residue protein sequence, read N- to C-terminus: uncharacterized protein (86 aa).

A run of 2 helical transmembrane segments spans residues 21–43 (VFWV…EATA) and 53–75 (FWYA…YFYF).

It is found in the cell membrane. This is an uncharacterized protein from Archaeoglobus fulgidus (strain ATCC 49558 / DSM 4304 / JCM 9628 / NBRC 100126 / VC-16).